The following is an 87-amino-acid chain: Small ribosomal subunit protein uS15c (87 aa).

This sequence belongs to the universal ribosomal protein uS15 family. Part of the 30S ribosomal subunit.

The protein resides in the plastid. The protein localises to the chloroplast. The sequence is that of Small ribosomal subunit protein uS15c (rps15) from Nicotiana tabacum (Common tobacco).